The primary structure comprises 430 residues: MAVFPLSAKHRKYALRALAVSIILVSAAYIASTEGTERVRPQRVEQKLPPLSWGGSGVQTAYWVQEAVQPGDSLADVLARSGMARDEIARITEKYGGEADLRHLRADQSVHVLVGGDGSAREVQFFTDEDGERNLVALEKKGGIWRRSASDADMKVLPTLRSVVVKTSARGSLARAEVPVEIRESLSGIFAGRFSLDGLKEGDAVRLLYDSLYFHGQQVAAGDILAAEVVKGGTTHQAFYYRSDKEGGGGGNYYDEDGRVLQEKGGFNIEPLVYTRISSPFGYRMHPILHTWRLHTGIDYAAPQGTPVRASADGVITFKGRKGGYGNAVMIRHANGVETLYAHLSAFSQAQGNVRGGEVIGFVGSTGRSTGPHLHYEARINGQPVNPVSVALPTPELTQADKAAFAAQKQKADALLARLRGIPVTVSQSD.

Zn(2+) is bound by residues His-295, Asp-299, and His-375.

The protein belongs to the peptidase M23B family. As to quaternary structure, monomer. Zn(2+) is required as a cofactor. Post-translationally, likely to be synthesized as a proenzyme. The cleavage of the N-terminal domain is probably required for the activation of the enzyme.

Its subcellular location is the cell outer membrane. Peptidoglycan (PG) degradation activity is completely inhibited by zinc chelating EDTA and phenanthroline. Functionally, has both endopeptidase and DD-carboxypeptidase activities. Degrades cell wall peptidoglycan (PG) to allow consummate expression of pili. Degrades N.gonorrhoeae and E.coli PG side chains in vitro. Required for proper piliation, which in turn is required for normal colony morphology, resistance to H(2)O(2) damage and defense against killing by human polymorphonuclear leukocytes (PMNs). Involved in type IV pilus biogenesis. Involved in resistance against non-oxidative killing by adherent CXCL8/IL8-primed human PMNs. Protects from killing by PMN-produced antimicrobial factors, which kill by a mechanism completely independent of reactive oxygen species (ROS) production of the PMNs. Provides protection against oxidative damage caused by peroxides H(2)O(2) and cumene hydroperoxide in vitro. This is DD-carboxypeptidase/endopeptidase Mpg from Neisseria gonorrhoeae (strain ATCC 700825 / FA 1090).